Consider the following 301-residue polypeptide: Cilia- and flagella-associated protein 161 (301 aa).

Positions 269–301 (GNPRDASSSMLDLPKPPTEDTRAMEQAMGLDTQ) are disordered.

In terms of assembly, microtubule inner protein component of sperm flagellar doublet microtubules. As to expression, expressed in airway epithelial cells.

The protein resides in the cytoplasm. It localises to the cytoskeleton. The protein localises to the cilium axoneme. It is found in the flagellum axoneme. In terms of biological role, microtubule inner protein (MIP) part of the dynein-decorated doublet microtubules (DMTs) in cilia axoneme, which is required for motile cilia beating. The polypeptide is Cilia- and flagella-associated protein 161 (Homo sapiens (Human)).